Here is a 211-residue protein sequence, read N- to C-terminus: MAPSRNGMILNPHFHKDWQKRVRTWFNQPARKIRRRKARQAKARRIAPRPVSGPLRPVVRCPTIRYHTKVRAGRGFTLEELKAAGINKKVARTIGISVDSRRRNRSTESLQANVQRLKEYRTKLIIFPRKAAKPKKGDSTEEELKMATQLTGPVMPIKKVHKKEKARVISEDEKNFKAFASLRMARANARLFGIRAKRAKEAAEQDVEKKK.

The protein belongs to the eukaryotic ribosomal protein eL13 family. In terms of assembly, component of the 60S large ribosomal subunit (LSU).

Its subcellular location is the cytoplasm. Component of the ribosome, a large ribonucleoprotein complex responsible for the synthesis of proteins in the cell. The small ribosomal subunit (SSU) binds messenger RNAs (mRNAs) and translates the encoded message by selecting cognate aminoacyl-transfer RNA (tRNA) molecules. The large subunit (LSU) contains the ribosomal catalytic site termed the peptidyl transferase center (PTC), which catalyzes the formation of peptide bonds, thereby polymerizing the amino acids delivered by tRNAs into a polypeptide chain. The nascent polypeptides leave the ribosome through a tunnel in the LSU and interact with protein factors that function in enzymatic processing, targeting, and the membrane insertion of nascent chains at the exit of the ribosomal tunnel. As part of the LSU, it is probably required for its formation and the maturation of rRNAs. The sequence is that of Large ribosomal subunit protein eL13 (rpl13) from Danio rerio (Zebrafish).